The primary structure comprises 134 residues: Large ribosomal subunit protein bL20 (134 aa).

This sequence belongs to the bacterial ribosomal protein bL20 family.

Functionally, binds directly to 23S ribosomal RNA and is necessary for the in vitro assembly process of the 50S ribosomal subunit. It is not involved in the protein synthesizing functions of that subunit. The chain is Large ribosomal subunit protein bL20 from Brucella anthropi (strain ATCC 49188 / DSM 6882 / CCUG 24695 / JCM 21032 / LMG 3331 / NBRC 15819 / NCTC 12168 / Alc 37) (Ochrobactrum anthropi).